The sequence spans 361 residues: Histidine biosynthesis bifunctional protein HisB (361 aa).

Residues Met1 to Pro172 are histidinol-phosphatase. The active-site Nucleophile is the Asp9. Residues Asp9 and Asp11 each contribute to the Mg(2+) site. Asp11 acts as the Proton donor in catalysis. The Zn(2+) site is built by Cys92, His94, Cys100, and Cys102. Asp129 contacts Mg(2+). An imidazoleglycerol-phosphate dehydratase region spans residues Arg173–Leu361.

This sequence in the N-terminal section; belongs to the histidinol-phosphatase family. The protein in the C-terminal section; belongs to the imidazoleglycerol-phosphate dehydratase family. Requires Mg(2+) as cofactor. The cofactor is Zn(2+).

Its subcellular location is the cytoplasm. The catalysed reaction is D-erythro-1-(imidazol-4-yl)glycerol 3-phosphate = 3-(imidazol-4-yl)-2-oxopropyl phosphate + H2O. It catalyses the reaction L-histidinol phosphate + H2O = L-histidinol + phosphate. Its pathway is amino-acid biosynthesis; L-histidine biosynthesis; L-histidine from 5-phospho-alpha-D-ribose 1-diphosphate: step 6/9. It functions in the pathway amino-acid biosynthesis; L-histidine biosynthesis; L-histidine from 5-phospho-alpha-D-ribose 1-diphosphate: step 8/9. This chain is Histidine biosynthesis bifunctional protein HisB, found in Actinobacillus pleuropneumoniae serotype 3 (strain JL03).